The primary structure comprises 440 residues: D-serine dehydratase (440 aa).

At K116 the chain carries N6-(pyridoxal phosphate)lysine.

The protein belongs to the serine/threonine dehydratase family. DsdA subfamily. Monomer. Pyridoxal 5'-phosphate is required as a cofactor.

It carries out the reaction D-serine = pyruvate + NH4(+). This chain is D-serine dehydratase, found in Salmonella choleraesuis (strain SC-B67).